The chain runs to 1069 residues: Receptor-type guanylate cyclase gcy-29 (1069 aa).

Positions 1-23 (MLPNFWNFQFIFVIFCWIPIVVS) are cleaved as a signal peptide. The Extracellular portion of the chain corresponds to 24–458 (DEKIVLKIGS…FREENCDYTQ (435 aa)). Residues asparagine 161, asparagine 240, and asparagine 407 are each glycosylated (N-linked (GlcNAc...) asparagine). A helical membrane pass occupies residues 459-479 (TIVIATAVVCIILTVFLGIWL). Topologically, residues 480 to 1069 (RRACETSALD…FKKKNNTFDF (590 aa)) are cytoplasmic. One can recognise a Protein kinase domain in the interval 497–806 (RDDVQILDEE…RVRLATEIAL (310 aa)). Residues 503–511 (LDEEQVKSV) and lysine 527 contribute to the ATP site. The Guanylate cyclase domain maps to 876-1006 (TVMFSDIVGF…ETVNIAAVME (131 aa)). The Mg(2+) site is built by aspartate 881, isoleucine 882, and aspartate 925.

It belongs to the adenylyl cyclase class-4/guanylyl cyclase family. In terms of tissue distribution, expressed bilaterally in ASE and AFD sensory neurons.

The protein localises to the cell membrane. It carries out the reaction GTP = 3',5'-cyclic GMP + diphosphate. Functionally, guanylate cyclase involved in the production of the second messenger cGMP. The chain is Receptor-type guanylate cyclase gcy-29 from Caenorhabditis elegans.